The sequence spans 283 residues: Acyl-coenzyme A diphosphatase FITM2 (283 aa).

A compositionally biased stretch (low complexity) spans 1 to 11 (MSTRRSSTRAD). The segment at 1 to 21 (MSTRRSSTRADSTTKRPASPN) is disordered. Topologically, residues 1-39 (MSTRRSSTRADSTTKRPASPNSTPNAALGIFVAIARQIL) are cytoplasmic. Residues 40–60 (FIDARKVALFYLAFVTVLSFI) traverse the membrane as a helical segment. The Lumenal segment spans residues 61–81 (ESRIELDSTYYLVQKHSVLNQ). Residues 82 to 102 (YGVKMGWFWTLVIVGPFIWFS) form a helical membrane-spanning segment. Residues 103–120 (SKAHNRRDRDQPIVDVCR) lie on the Cytoplasmic side of the membrane. The helical transmembrane segment at 121-141 (LGVGTACWYFSVQFFHKVLAL) threads the bilayer. Residues 142 to 168 (TSMCDKGRTLTRAQCSEKEGVWTPGYD) are Lumenal-facing. The chain crosses the membrane as a helical span at residues 169–189 (ISGHCFLMIYSILIITEEAIA). His172 is an active-site residue. The Cytoplasmic segment spans residues 190-219 (YRHYQQVTDAVHQMDGDREEHDRLTRCIQY). The next 2 helical transmembrane spans lie at 220 to 240 (FFVAMLFLHAFWFKQIIISVL) and 241 to 261 (YYHIFIEEILGAVAAVVCWFV). His243 is a catalytic residue. Topologically, residues 262–283 (TYRMLYPAGFLASPIRRTVGRK) are cytoplasmic.

The protein belongs to the FIT family. FIT2 subfamily.

Its subcellular location is the endoplasmic reticulum membrane. The enzyme catalyses an acyl-CoA + H2O = an acyl-4'-phosphopantetheine + adenosine 3',5'-bisphosphate + 2 H(+). Fatty acyl-coenzyme A (CoA) diphosphatase that hydrolyzes fatty acyl-CoA to yield acyl-4'-phosphopantetheine and adenosine 3',5'-bisphosphate. Preferentially hydrolyzes unsaturated long-chain acyl-CoA substrates in the endoplasmic reticulum (ER) lumen. This catalytic activity is required for maintaining ER structure and for lipid droplets (LDs) biogenesis, which are lipid storage organelles involved in maintaining lipid and energy homeostasis. May directly bind to diacylglycerol (DAGs) and triacylglycerol, which is also important for LD biogenesis. May support directional budding of nacent LDs from the ER into the cytosol by reducing DAG levels at sites of LD formation. May play a role in the regulation of cell morphology, ER morphology and cytoskeletal organization. This is Acyl-coenzyme A diphosphatase FITM2 from Caenorhabditis elegans.